A 776-amino-acid polypeptide reads, in one-letter code: Protein translocase subunit SecA 2 (776 aa).

ATP-binding positions include Gln80, 98–102 (GEGKT), and Asp486.

It belongs to the SecA family. As to quaternary structure, monomer and homodimer. Part of the essential Sec protein translocation apparatus which comprises SecA, SecYEG and auxiliary proteins SecDF. Other proteins may also be involved.

The protein resides in the cell membrane. Its subcellular location is the cytoplasm. The enzyme catalyses ATP + H2O + cellular proteinSide 1 = ADP + phosphate + cellular proteinSide 2.. In terms of biological role, part of the Sec protein translocase complex. Interacts with the SecYEG preprotein conducting channel. Has a central role in coupling the hydrolysis of ATP to the transfer of proteins into and across the cell membrane, serving as an ATP-driven molecular motor driving the stepwise translocation of polypeptide chains across the membrane. This chain is Protein translocase subunit SecA 2, found in Listeria monocytogenes serotype 1/2a (strain 10403S).